The primary structure comprises 496 residues: Glycerol kinase (496 aa).

ADP is bound at residue Thr12. ATP contacts are provided by Thr12, Thr13, and Ser14. Thr12 is a sn-glycerol 3-phosphate binding site. Position 16 (Arg16) interacts with ADP. Arg82, Glu83, and Tyr134 together coordinate sn-glycerol 3-phosphate. Positions 82, 83, and 134 each coordinate glycerol. His230 carries the post-translational modification Phosphohistidine; by HPr. Asp244 serves as a coordination point for sn-glycerol 3-phosphate. Positions 244 and 245 each coordinate glycerol. Residues Thr266 and Gly309 each contribute to the ADP site. Positions 266, 309, 313, and 410 each coordinate ATP. ADP is bound by residues Gly410 and Asn414.

It belongs to the FGGY kinase family. In terms of assembly, homotetramer and homodimer (in equilibrium). In terms of processing, the phosphoenolpyruvate-dependent sugar phosphotransferase system (PTS), including enzyme I, and histidine-containing protein (HPr) are required for the phosphorylation, which leads to the activation of the enzyme.

It carries out the reaction glycerol + ATP = sn-glycerol 3-phosphate + ADP + H(+). It functions in the pathway polyol metabolism; glycerol degradation via glycerol kinase pathway; sn-glycerol 3-phosphate from glycerol: step 1/1. Activated by phosphorylation and inhibited by fructose 1,6-bisphosphate (FBP). Key enzyme in the regulation of glycerol uptake and metabolism. Catalyzes the phosphorylation of glycerol to yield sn-glycerol 3-phosphate. The sequence is that of Glycerol kinase from Bacillus subtilis (strain 168).